Reading from the N-terminus, the 541-residue chain is 2-hydroxyacylsphingosine 1-beta-galactosyltransferase (541 aa).

The N-terminal stretch at 1 to 20 is a signal peptide; sequence MKSYTPYFILLWSAVGIAKA. 3 N-linked (GlcNAc...) asparagine glycosylation sites follow: asparagine 78, asparagine 333, and asparagine 442. Residues 472–492 traverse the membrane as a helical segment; it reads YFLLDIAFVLLLGAALLYFLL.

It belongs to the UDP-glycosyltransferase family.

The protein resides in the membrane. Its subcellular location is the endoplasmic reticulum. The catalysed reaction is an N-acylsphing-4-enine + UDP-alpha-D-galactose = a beta-D-galactosyl-(1&lt;-&gt;1')-N-acylsphing-4-enine + UDP + H(+). The enzyme catalyses an N-acyl-sphingoid base + UDP-alpha-D-galactose = a D-galactosylceramide + UDP + H(+). It catalyses the reaction N-(2-hydroxy-hexanoyl)-sphing-4-enine + UDP-alpha-D-galactose = N-(2-hydroxy-hexanoyl)-beta-D-galactosyl-sphing-4-enine + UDP + H(+). It carries out the reaction N-(2-hydroxy-hexanoyl)-sphinganine + UDP-alpha-D-galactose = N-(2-hydroxyhexanoyl)-beta-D-galactosylsphinganine + UDP + H(+). Its pathway is sphingolipid metabolism; galactosylceramide biosynthesis. Its function is as follows. Catalyzes the transfer of galactose to ceramide, a key enzymatic step in the biosynthesis of galactocerebrosides, which are abundant sphingolipids of the myelin membrane of the central nervous system and peripheral nervous system. Galactosylates both hydroxy- and non-hydroxy fatty acid-containing ceramides and diglycerides. This chain is 2-hydroxyacylsphingosine 1-beta-galactosyltransferase, found in Homo sapiens (Human).